We begin with the raw amino-acid sequence, 705 residues long: Ribosomal RNA large subunit methyltransferase K/L (705 aa).

One can recognise a THUMP domain in the interval 43 to 154; it reads LMYQSLMWSR…KDTASIALDL (112 aa).

Belongs to the methyltransferase superfamily. RlmKL family.

It localises to the cytoplasm. It catalyses the reaction guanosine(2445) in 23S rRNA + S-adenosyl-L-methionine = N(2)-methylguanosine(2445) in 23S rRNA + S-adenosyl-L-homocysteine + H(+). The enzyme catalyses guanosine(2069) in 23S rRNA + S-adenosyl-L-methionine = N(2)-methylguanosine(2069) in 23S rRNA + S-adenosyl-L-homocysteine + H(+). Functionally, specifically methylates the guanine in position 2445 (m2G2445) and the guanine in position 2069 (m7G2069) of 23S rRNA. This is Ribosomal RNA large subunit methyltransferase K/L from Erwinia tasmaniensis (strain DSM 17950 / CFBP 7177 / CIP 109463 / NCPPB 4357 / Et1/99).